A 338-amino-acid chain; its full sequence is MTVRVGVIGTGMIGQDHIRRLTRVVTGAEIVAVTDIDADRAASVAGGVGARTMPSGADVIGSADVDAVLVTSWGPTHAEHVLAAIEAGKAVFCEKPLATEVEDCLRIVEAESARGKRLVQVGFMRRYDAGYREMKELVDAGGIGTPLMAHCVHRNPTVPETYHSAMAAQDTAVHEIDTLRWLLDDEIVSAQVIRPRRTSKRFEHLQDPQIMLFETESGARIDVEVFVNCQYGYDIQCEVVGESGTVRLPDPARTGLPSAGSVRAAITQDWKQRFADAFDAELQSWVDSVAHGAAGGPSAWDGYAATAICGATVEALHSGQVVPVALKDRPGLYGGNNQ.

The protein belongs to the Gfo/Idh/MocA family. Homotetramer.

The catalysed reaction is myo-inositol + NAD(+) = scyllo-inosose + NADH + H(+). Involved in the oxidation of myo-inositol (MI) to 2-keto-myo-inositol (2KMI or 2-inosose). The polypeptide is Inositol 2-dehydrogenase 3 (Saccharopolyspora erythraea (strain ATCC 11635 / DSM 40517 / JCM 4748 / NBRC 13426 / NCIMB 8594 / NRRL 2338)).